The following is a 212-amino-acid chain: External core antigen (212 aa).

Positions 1-19 are cleaved as a signal peptide; it reads MQLFHLCLVISCSCPTVQA. The interval 25–27 is HBEAG; the sequence is GWL. Positions 165–212 are disordered; the sequence is NAPILSTLPETTVVRRRGRSPRRRTPSPRRRRSQSPRRRRSQSRESQC. The segment covering 178 to 205 has biased composition (basic residues); sequence VRRRGRSPRRRTPSPRRRRSQSPRRRRS. One copy of the 1; half-length repeat lies at 184–190; the sequence is SPRRRTP. Residues 184 to 206 are 3 X 8 AA repeats of S-P-R-R-R-R-S-Q; the sequence is SPRRRTPSPRRRRSQSPRRRRSQ. The propeptide occupies 184-212; the sequence is SPRRRTPSPRRRRSQSPRRRRSQSRESQC. A run of 2 repeats spans residues 191–198 and 199–206.

Belongs to the orthohepadnavirus precore antigen family. Homodimerizes. Post-translationally, phosphorylated. Cleaved by host furin.

Its subcellular location is the secreted. The protein localises to the host nucleus. Its function is as follows. May regulate immune response to the intracellular capsid in acting as a T-cell tolerogen, by having an immunoregulatory effect which prevents destruction of infected cells by cytotoxic T-cells. This immune regulation may predispose to chronicity during perinatal infections and prevent severe liver injury during adult infections. The sequence is that of External core antigen from Hepatitis B virus genotype B1 subtype adw (isolate Japan/pJDW233/1988) (HBV-B).